The sequence spans 463 residues: Glutamate--tRNA ligase 1 (463 aa).

Positions 10 to 20 (PSPTGYLHIGG) match the 'HIGH' region motif. The 'KMSKS' region motif lies at 238–242 (KLSKR). Lys-241 serves as a coordination point for ATP.

It belongs to the class-I aminoacyl-tRNA synthetase family. Glutamate--tRNA ligase type 1 subfamily. In terms of assembly, monomer.

The protein localises to the cytoplasm. The enzyme catalyses tRNA(Glu) + L-glutamate + ATP = L-glutamyl-tRNA(Glu) + AMP + diphosphate. In terms of biological role, catalyzes the attachment of glutamate to tRNA(Glu) in a two-step reaction: glutamate is first activated by ATP to form Glu-AMP and then transferred to the acceptor end of tRNA(Glu). The polypeptide is Glutamate--tRNA ligase 1 (Helicobacter pylori (strain G27)).